The sequence spans 136 residues: 5-hydroxyisourate hydrolase (136 aa).

An N-terminal signal peptide occupies residues 1 to 20 (MKRYILATVIASLVAAPAMA). 3 residues coordinate substrate: His31, Arg69, and Tyr133.

This sequence belongs to the transthyretin family. 5-hydroxyisourate hydrolase subfamily. In terms of assembly, homotetramer.

The protein localises to the periplasm. It catalyses the reaction 5-hydroxyisourate + H2O = 5-hydroxy-2-oxo-4-ureido-2,5-dihydro-1H-imidazole-5-carboxylate + H(+). In terms of biological role, catalyzes the hydrolysis of 5-hydroxyisourate (HIU) to 2-oxo-4-hydroxy-4-carboxy-5-ureidoimidazoline (OHCU). In Salmonella typhimurium (strain LT2 / SGSC1412 / ATCC 700720), this protein is 5-hydroxyisourate hydrolase (hiuH).